Reading from the N-terminus, the 262-residue chain is 26 kDa secreted antigen (262 aa).

The signal sequence occupies residues 1–21 (MSVVHKACLIALLFVSSGVAQ). ShKT domains lie at 23–57 (CMDS…CNTC) and 59–93 (CRDE…CGLC). Cystine bridges form between Cys23/Cys57, Cys30/Cys50, Cys37/Cys54, Cys59/Cys93, Cys66/Cys86, and Cys73/Cys90.

This sequence belongs to the phosphatidylethanolamine-binding protein family.

The protein localises to the secreted. Binds phosphatidylethanolamine. The polypeptide is 26 kDa secreted antigen (TES-26) (Toxocara canis (Canine roundworm)).